A 371-amino-acid chain; its full sequence is Cytochrome b (371 aa).

The next 4 membrane-spanning stretches (helical) occupy residues 25-45 (FGSM…FLAV), 69-90 (WMMQ…YIHI), 105-125 (WMSG…GYIL), and 170-190 (FFAL…LHIL). The heme b site is built by His75 and His89. The heme b site is built by His174 and His188. His193 provides a ligand contact to a ubiquinone. The next 4 helical transmembrane spans lie at 218 to 238 (YKDL…TFFL), 280 to 300 (LGGA…PFTH), 312 to 332 (MSQL…WAAT), and 339 to 358 (FMMI…ISNP).

Belongs to the cytochrome b family. The cytochrome bc1 complex contains 3 respiratory subunits (MT-CYB, CYC1 and UQCRFS1), 2 core proteins (UQCRC1 and UQCRC2) and probably 6 low-molecular weight proteins. Requires heme b as cofactor.

The protein localises to the mitochondrion inner membrane. Functionally, component of the ubiquinol-cytochrome c reductase complex (complex III or cytochrome b-c1 complex) that is part of the mitochondrial respiratory chain. The b-c1 complex mediates electron transfer from ubiquinol to cytochrome c. Contributes to the generation of a proton gradient across the mitochondrial membrane that is then used for ATP synthesis. The polypeptide is Cytochrome b (MT-CYB) (Casarea dussumieri (Round Island keel-scaled boa)).